The chain runs to 362 residues: Methylthioribose-1-phosphate isomerase (362 aa).

Catalysis depends on Asp252, which acts as the Proton donor.

It belongs to the eIF-2B alpha/beta/delta subunits family. MtnA subfamily.

The protein localises to the cytoplasm. The protein resides in the nucleus. The enzyme catalyses 5-(methylsulfanyl)-alpha-D-ribose 1-phosphate = 5-(methylsulfanyl)-D-ribulose 1-phosphate. Its pathway is amino-acid biosynthesis; L-methionine biosynthesis via salvage pathway; L-methionine from S-methyl-5-thio-alpha-D-ribose 1-phosphate: step 1/6. In terms of biological role, catalyzes the interconversion of methylthioribose-1-phosphate (MTR-1-P) into methylthioribulose-1-phosphate (MTRu-1-P). The polypeptide is Methylthioribose-1-phosphate isomerase (Drosophila pseudoobscura pseudoobscura (Fruit fly)).